Consider the following 436-residue polypeptide: Methylenetetrahydrofolate--tRNA-(uracil-5-)-methyltransferase TrmFO (436 aa).

9–14 serves as a coordination point for FAD; sequence GAGLAG.

The protein belongs to the MnmG family. TrmFO subfamily. FAD is required as a cofactor.

It is found in the cytoplasm. The catalysed reaction is uridine(54) in tRNA + (6R)-5,10-methylene-5,6,7,8-tetrahydrofolate + NADH + H(+) = 5-methyluridine(54) in tRNA + (6S)-5,6,7,8-tetrahydrofolate + NAD(+). It catalyses the reaction uridine(54) in tRNA + (6R)-5,10-methylene-5,6,7,8-tetrahydrofolate + NADPH + H(+) = 5-methyluridine(54) in tRNA + (6S)-5,6,7,8-tetrahydrofolate + NADP(+). Its function is as follows. Catalyzes the folate-dependent formation of 5-methyl-uridine at position 54 (M-5-U54) in all tRNAs. This Acetivibrio thermocellus (strain ATCC 27405 / DSM 1237 / JCM 9322 / NBRC 103400 / NCIMB 10682 / NRRL B-4536 / VPI 7372) (Clostridium thermocellum) protein is Methylenetetrahydrofolate--tRNA-(uracil-5-)-methyltransferase TrmFO.